A 500-amino-acid polypeptide reads, in one-letter code: L-arabinose isomerase (500 aa).

Glutamate 306, glutamate 333, histidine 349, and histidine 448 together coordinate Mn(2+).

The protein belongs to the arabinose isomerase family. The cofactor is Mn(2+).

The catalysed reaction is beta-L-arabinopyranose = L-ribulose. Its pathway is carbohydrate degradation; L-arabinose degradation via L-ribulose; D-xylulose 5-phosphate from L-arabinose (bacterial route): step 1/3. Its function is as follows. Catalyzes the conversion of L-arabinose to L-ribulose. The sequence is that of L-arabinose isomerase from Shewanella sp. (strain MR-4).